The sequence spans 474 residues: Cysteine--tRNA ligase (474 aa).

Cys-30 contributes to the Zn(2+) binding site. The 'HIGH' region motif lies at 32-42; the sequence is PTVYNYAHIGN. Residues Cys-215, His-240, and Glu-244 each coordinate Zn(2+). Positions 272 to 276 match the 'KMSKS' region motif; sequence KMSKS. Lys-275 lines the ATP pocket.

It belongs to the class-I aminoacyl-tRNA synthetase family. As to quaternary structure, monomer. It depends on Zn(2+) as a cofactor.

The protein localises to the cytoplasm. It carries out the reaction tRNA(Cys) + L-cysteine + ATP = L-cysteinyl-tRNA(Cys) + AMP + diphosphate. The polypeptide is Cysteine--tRNA ligase (Brachyspira hyodysenteriae (strain ATCC 49526 / WA1)).